Reading from the N-terminus, the 118-residue chain is Ribonuclease P protein component 2 (118 aa).

This sequence belongs to the eukaryotic/archaeal RNase P protein component 2 family. As to quaternary structure, consists of a catalytic RNA component and at least 4-5 protein subunits.

It localises to the cytoplasm. It carries out the reaction Endonucleolytic cleavage of RNA, removing 5'-extranucleotides from tRNA precursor.. Its function is as follows. Part of ribonuclease P, a protein complex that generates mature tRNA molecules by cleaving their 5'-ends. This Pyrococcus abyssi (strain GE5 / Orsay) protein is Ribonuclease P protein component 2.